The chain runs to 202 residues: LexA repressor (202 aa).

Residues 28 to 48 (RAEIAAQLGFRSPNAAEEHLK) constitute a DNA-binding region (H-T-H motif). Active-site for autocatalytic cleavage activity residues include serine 119 and lysine 156.

Belongs to the peptidase S24 family. Homodimer.

It catalyses the reaction Hydrolysis of Ala-|-Gly bond in repressor LexA.. Functionally, represses a number of genes involved in the response to DNA damage (SOS response), including recA and lexA. Binds to the 16 bp palindromic sequence 5'-CTGTATATATATACAG-3'. In the presence of single-stranded DNA, RecA interacts with LexA causing an autocatalytic cleavage which disrupts the DNA-binding part of LexA, leading to derepression of the SOS regulon and eventually DNA repair. The sequence is that of LexA repressor from Erwinia tasmaniensis (strain DSM 17950 / CFBP 7177 / CIP 109463 / NCPPB 4357 / Et1/99).